Reading from the N-terminus, the 469-residue chain is Peripherin (469 aa).

Composition is skewed to low complexity over residues 1–18 (MSHPSGLRSSVSSTSYRR) and 27–53 (SPGAFSYSSSSRFSSSRLLGSASPGSS). A disordered region spans residues 1 to 60 (MSHPSGLRSSVSSTSYRRTFGPPPSLSPGAFSYSSSSRFSSSRLLGSASPGSSVRLGSFR). The segment at 1-98 (MSHPSGLRSS…FLATRSNEKQ (98 aa)) is head. Tyrosine 16 carries the post-translational modification 3'-nitrotyrosine. Residues serine 27, serine 49, and serine 58 each carry the phosphoserine modification. The region spanning 96 to 406 (EKQELQELND…KLLEGEESRI (311 aa)) is the IF rod domain. Residues 99–131 (ELQELNDRFANFIEKVRFLEQQNAALRGELNQA) are coil 1A. The interval 132–142 (RGQEPARADQL) is linker 1. A coil 1B region spans residues 143–238 (CQQELRELRR…KLHEEELRDL (96 aa)). Residues 239-261 (QLSVESQQVQHVEVEATVKPELT) form a linker 2 region. Positions 262 to 404 (AALRDIRAQY…YRKLLEGEES (143 aa)) are coil 2. Residue tyrosine 378 is modified to 3'-nitrotyrosine. Residues 405-469 (RISVPVHSFA…SELDKSPQSY (65 aa)) form a tail region. Residues 447 to 469 (GEQVVTESQKEQHSELDKSPQSY) are disordered. Position 469 is a phosphotyrosine (tyrosine 469).

It belongs to the intermediate filament family. In terms of assembly, forms homodimers (in vitro). Homopolymerizes into a filamentous network (in vitro). Forms heterodimers with NEFL, NEFM or NEFH (in vitro). Interacts with DST (via C-terminus). Interacts with RAB7A; the interaction is direct. Interacts with PRKCE (via phorbol-ester/DAG-type 2 domain). In terms of processing, phosphorylated; phosphorylation increases after nerve injury in regenerating neurons.

It localises to the cytoplasm. The protein resides in the cytoskeleton. The protein localises to the cell projection. It is found in the axon. Its subcellular location is the perikaryon. Functionally, class-III neuronal intermediate filament protein. May form an independent structural network without the involvement of other neurofilaments or may cooperate with the neuronal intermediate filament proteins NEFL, NEFH, NEFM and INA to form a filamentous network. Assembly of the neuronal intermediate filaments may be regulated by RAB7A. Plays a role in the development of unmyelinated sensory neurons. May be involved in axon elongation and axon regeneration after injury. Inhibits neurite extension in type II spiral ganglion neurons in the cochlea. In Bos taurus (Bovine), this protein is Peripherin (PRPH).